The primary structure comprises 178 residues: Interleukin-10 (178 aa).

An N-terminal signal peptide occupies residues 1–18; it reads MHSSALLCCLVLLTGVRA. Cystine bridges form between Cys-30/Cys-126 and Cys-80/Cys-132. An N-linked (GlcNAc...) asparagine glycan is attached at Asn-134.

It belongs to the IL-10 family. Homodimer. Interacts with IL10RA and IL10RB.

It is found in the secreted. Functionally, major immune regulatory cytokine that acts on many cells of the immune system where it has profound anti-inflammatory functions, limiting excessive tissue disruption caused by inflammation. Mechanistically, IL10 binds to its heterotetrameric receptor comprising IL10RA and IL10RB leading to JAK1 and STAT2-mediated phosphorylation of STAT3. In turn, STAT3 translocates to the nucleus where it drives expression of anti-inflammatory mediators. Targets antigen-presenting cells (APCs) such as macrophages and monocytes and inhibits their release of pro-inflammatory cytokines including granulocyte-macrophage colony-stimulating factor /GM-CSF, granulocyte colony-stimulating factor/G-CSF, IL-1 alpha, IL-1 beta, IL-6, IL-8 and TNF-alpha. Also interferes with antigen presentation by reducing the expression of MHC-class II and co-stimulatory molecules, thereby inhibiting their ability to induce T cell activation. In addition, controls the inflammatory response of macrophages by reprogramming essential metabolic pathways including mTOR signaling. In Macaca nemestrina (Pig-tailed macaque), this protein is Interleukin-10 (IL10).